Reading from the N-terminus, the 237-residue chain is Prospore formation at selected spindle poles protein 1 (237 aa).

It is found in the nucleus. Its subcellular location is the cytoplasm. It localises to the cytoskeleton. The protein localises to the microtubule organizing center. The protein resides in the spindle pole body. Its function is as follows. Involved in the pathway that organizes the shaping and sizing of the prospore membrane (PSM) during sporulation. Required to localize MPC54 to all four spindle pole bodies, and localize DON1 and SPO14 to four prospore membranes. In Saccharomyces cerevisiae (strain ATCC 204508 / S288c) (Baker's yeast), this protein is Prospore formation at selected spindle poles protein 1 (PFS1).